The following is a 269-amino-acid chain: Glutamate racemase (269 aa).

Residues D11–S12 and Y43–G44 each bind substrate. C74 functions as the Proton donor/acceptor in the catalytic mechanism. Position 75–76 (N75–T76) interacts with substrate. C185 serves as the catalytic Proton donor/acceptor. T186–H187 serves as a coordination point for substrate.

It belongs to the aspartate/glutamate racemases family.

It carries out the reaction L-glutamate = D-glutamate. The protein operates within cell wall biogenesis; peptidoglycan biosynthesis. Its function is as follows. Provides the (R)-glutamate required for cell wall biosynthesis. The protein is Glutamate racemase of Bacillus cereus (strain ATCC 10987 / NRS 248).